The following is a 199-amino-acid chain: Urease accessory protein UreG (199 aa).

A GTP-binding site is contributed by 8–15 (GPVGSGKT).

Belongs to the SIMIBI class G3E GTPase family. UreG subfamily. In terms of assembly, homodimer. UreH, UreF and UreG form a complex that acts as a GTP-hydrolysis-dependent molecular chaperone, activating the urease apoprotein by helping to assemble the nickel containing metallocenter of UreC. The UreE protein probably delivers the nickel.

The protein resides in the cytoplasm. Functionally, facilitates the functional incorporation of the urease nickel metallocenter. This process requires GTP hydrolysis, probably effectuated by UreG. The sequence is that of Urease accessory protein UreG from Helicobacter pylori (strain J99 / ATCC 700824) (Campylobacter pylori J99).